The chain runs to 497 residues: tRNA (adenine(58)-N(1))-methyltransferase non-catalytic subunit TRM6 (497 aa).

Positions 81-103 (LEEPASETKEAGTDNRNIVDDGK) are disordered. Residues 95–105 (NRNIVDDGKSQ) form a substrate region. T108 is modified (phosphothreonine). Substrate stretches follow at residues 146 to 155 (KYIKKKKKKY) and 176 to 183 (REPGKINH). Positions 275–354 (MLSSEPKDST…EKQRRQEEQR (80 aa)) are disordered. The segment covering 289 to 307 (SNGELEEKEIAEQADEDNI) has biased composition (acidic residues). The segment covering 328-354 (PENKEPKEKRSKRDYIQEKQRRQEEQR) has biased composition (basic and acidic residues). Substrate contacts are provided by R349 and R377. 2 substrate regions span residues 415 to 423 (RERGGVINL) and 434 to 441 (QVLPDRSH). Residues 474-497 (TGALDPHKAEEPAAKKQKCMESAS) form a disordered region. Basic and acidic residues predominate over residues 478-487 (DPHKAEEPAA).

The protein belongs to the TRM6/GCD10 family. Heterotetramer; composed of two copies of TRMT6 and two copies of TRMT61A.

The protein resides in the nucleus. Substrate-binding subunit of tRNA (adenine-N(1)-)-methyltransferase, which catalyzes the formation of N(1)-methyladenine at position 58 (m1A58) in initiator methionyl-tRNA. Together with the TRMT61A catalytic subunit, part of a mRNA N(1)-methyltransferase complex that mediates methylation of adenosine residues at the N(1) position of a small subset of mRNAs: N(1) methylation takes place in tRNA T-loop-like structures of mRNAs and is only present at low stoichiometries. This is tRNA (adenine(58)-N(1))-methyltransferase non-catalytic subunit TRM6 (Trmt6) from Mus musculus (Mouse).